A 257-amino-acid polypeptide reads, in one-letter code: uncharacterized protein (257 aa).

Ser127 bears the Phosphoserine mark. Disordered stretches follow at residues His146–Gly174 and Ala210–Lys231. Positions Pro151–Ser160 are enriched in polar residues. The stretch at His196 to Thr257 forms a coiled coil.

This is an uncharacterized protein from Arabidopsis thaliana (Mouse-ear cress).